We begin with the raw amino-acid sequence, 170 residues long: Photosystem II extrinsic protein V (170 aa).

The N-terminal stretch at 1-33 (MASLFSTLQRSLKGLLILVPVLIGLVLASPAEA) is a signal peptide. Heme c is bound by residues Cys70, Cys73, His74, and Met137.

Belongs to the cytochrome c family. PsbV subfamily. PSII is composed of 1 copy each of membrane proteins PsbA, PsbB, PsbC, PsbD, PsbE, PsbF, PsbH, PsbI, PsbJ, PsbK, PsbL, PsbM, PsbT, PsbX, PsbY, PsbZ, Psb30/Ycf12, peripheral proteins PsbO, CyanoQ (PsbQ), PsbU, PsbV and a large number of cofactors. It forms dimeric complexes. The cofactor is heme c.

Its subcellular location is the cellular thylakoid membrane. Functionally, one of the extrinsic, lumenal subunits of photosystem II (PSII). PSII is a light-driven water plastoquinone oxidoreductase, using light energy to abstract electrons from H(2)O, generating a proton gradient subsequently used for ATP formation. The extrinsic proteins stabilize the structure of photosystem II oxygen-evolving complex (OEC), the ion environment of oxygen evolution and protect the OEC against heat-induced inactivation. Low-potential cytochrome c that plays a role in the OEC of PSII. The protein is Photosystem II extrinsic protein V of Parasynechococcus marenigrum (strain WH8102).